A 279-amino-acid chain; its full sequence is Proline-rich protein 23D1 (279 aa).

2 disordered regions span residues 1 to 60 and 247 to 270; these read MYGY…PHLN and LRPM…RPPS. Residues 15–33 show a composition bias toward polar residues; sequence TEPQNDNEGETSLATTQMN.

This sequence belongs to the PRR23 family.

This Homo sapiens (Human) protein is Proline-rich protein 23D1 (PRR23D1).